Here is a 259-residue protein sequence, read N- to C-terminus: MTPTTPADFVVAIPARYASTRLPGKPLQLIGDRPMIQHVAERALLAGAREVWVATDDARIVAAIEHLPGVHVAMTGTAHLSGTDRLAECARIAGWDDQACVVNLQGDEPFAPAAGIRAVADLLQRSGAQMATLAAPVDNAHDLFDPNVVKLVRTAGGDALYFSRAPIPWHRDSFASQHDSVPAEGQWLRHIGIYAYRAGFLQRFAAMPPGMLERTESLEQLRVMEAGYRIAVAVTPEPFPPGIDTADDLVRAQMRVASA.

This sequence belongs to the KdsB family.

Its subcellular location is the cytoplasm. It catalyses the reaction 3-deoxy-alpha-D-manno-oct-2-ulosonate + CTP = CMP-3-deoxy-beta-D-manno-octulosonate + diphosphate. It functions in the pathway nucleotide-sugar biosynthesis; CMP-3-deoxy-D-manno-octulosonate biosynthesis; CMP-3-deoxy-D-manno-octulosonate from 3-deoxy-D-manno-octulosonate and CTP: step 1/1. It participates in bacterial outer membrane biogenesis; lipopolysaccharide biosynthesis. Functionally, activates KDO (a required 8-carbon sugar) for incorporation into bacterial lipopolysaccharide in Gram-negative bacteria. The sequence is that of 3-deoxy-manno-octulosonate cytidylyltransferase from Xanthomonas axonopodis pv. citri (strain 306).